Consider the following 288-residue polypeptide: Bifunctional protein FolD (288 aa).

Residues 166 to 168 (GAS) and isoleucine 232 each bind NADP(+).

The protein belongs to the tetrahydrofolate dehydrogenase/cyclohydrolase family. Homodimer.

It catalyses the reaction (6R)-5,10-methylene-5,6,7,8-tetrahydrofolate + NADP(+) = (6R)-5,10-methenyltetrahydrofolate + NADPH. The catalysed reaction is (6R)-5,10-methenyltetrahydrofolate + H2O = (6R)-10-formyltetrahydrofolate + H(+). It functions in the pathway one-carbon metabolism; tetrahydrofolate interconversion. In terms of biological role, catalyzes the oxidation of 5,10-methylenetetrahydrofolate to 5,10-methenyltetrahydrofolate and then the hydrolysis of 5,10-methenyltetrahydrofolate to 10-formyltetrahydrofolate. The chain is Bifunctional protein FolD from Erwinia tasmaniensis (strain DSM 17950 / CFBP 7177 / CIP 109463 / NCPPB 4357 / Et1/99).